Reading from the N-terminus, the 340-residue chain is Nesprin-4 (340 aa).

Disordered stretches follow at residues 1-86 (MAQF…DGGK) and 254-277 (HRRR…DAML). Over 1 to 291 (MAQFPLLGHG…GVPAPASRRP (291 aa)) the chain is Cytoplasmic. A compositionally biased stretch (basic and acidic residues) spans 53-63 (APEHFMDEPKS). One can recognise a KASH domain in the interval 283 to 340 (VPAPASRRPLTFLLLLLFLLLVGATLLLPLSGVPCCSHTRLARTPYLVLSYVNGLPPI). A helical; Anchor for type IV membrane protein membrane pass occupies residues 292 to 312 (LTFLLLLLFLLLVGATLLLPL). At 313–340 (SGVPCCSHTRLARTPYLVLSYVNGLPPI) the chain is on the perinuclear space side.

It belongs to the nesprin family. Core component of LINC complexes which are composed of inner nuclear membrane SUN domain-containing proteins coupled to outer nuclear membrane KASH domain-containing nesprins. SUN and KASH domain-containing proteins seem to bind each other promiscuously; however, differentially expression of LINC complex constituents can give rise to specific assemblies. Probably part of a SUN1-containing LINC complex. Interacts with kinesins KIF5B and KLC1.

It is found in the nucleus outer membrane. In terms of biological role, as a component of the LINC (LInker of Nucleoskeleton and Cytoskeleton) complex, involved in the connection between the nuclear lamina and the cytoskeleton. The nucleocytoplasmic interactions established by the LINC complex play an important role in the transmission of mechanical forces across the nuclear envelope and in nuclear movement and positioning. Behaves as a kinesin cargo, providing a functional binding site for kinesin-1 at the nuclear envelope. Hence may contribute to the establishment of secretory epithelial morphology, by promoting kinesin-dependent apical migration of the centrosome and Golgi apparatus and basal localization of the nucleus. This Rattus norvegicus (Rat) protein is Nesprin-4 (Syne4).